The following is a 361-amino-acid chain: Pseudouridine-5'-phosphate glycosidase (361 aa).

The active-site Proton donor is Glu27. Substrate contacts are provided by Lys88 and Val108. Residue Asp140 participates in Mn(2+) binding. Substrate is bound at residue 142-144 (SAD). Catalysis depends on Lys161, which acts as the Nucleophile. The segment at 306 to 361 (DRSPTDPAAPDPTAPDPAAPDPTAPDPAAPDSAAPDLAGPDPSAPDPAAVARAHRP) is disordered. A compositionally biased stretch (pro residues) spans 312–333 (PAAPDPTAPDPAAPDPTAPDPA). Positions 334–354 (APDSAAPDLAGPDPSAPDPAA) are enriched in low complexity.

It belongs to the pseudouridine-5'-phosphate glycosidase family. As to quaternary structure, homotrimer. It depends on Mn(2+) as a cofactor.

The catalysed reaction is D-ribose 5-phosphate + uracil = psi-UMP + H2O. Catalyzes the reversible cleavage of pseudouridine 5'-phosphate (PsiMP) to ribose 5-phosphate and uracil. Functions biologically in the cleavage direction, as part of a pseudouridine degradation pathway. The protein is Pseudouridine-5'-phosphate glycosidase of Frankia alni (strain DSM 45986 / CECT 9034 / ACN14a).